The sequence spans 139 residues: Putative pre-16S rRNA nuclease (139 aa).

Belongs to the YqgF nuclease family.

The protein resides in the cytoplasm. Could be a nuclease involved in processing of the 5'-end of pre-16S rRNA. This Streptococcus pneumoniae (strain JJA) protein is Putative pre-16S rRNA nuclease.